We begin with the raw amino-acid sequence, 324 residues long: Elongation factor P--(R)-beta-lysine ligase (324 aa).

75-77 (SPE) contributes to the substrate binding site. Residues 99–101 (RNE) and Asn-108 each bind ATP. Tyr-117 lines the substrate pocket. 243 to 244 (EL) contacts ATP. Glu-250 serves as a coordination point for substrate. Gly-299 is an ATP binding site.

The protein belongs to the class-II aminoacyl-tRNA synthetase family. EpmA subfamily. Homodimer.

It catalyses the reaction D-beta-lysine + L-lysyl-[protein] + ATP = N(6)-((3R)-3,6-diaminohexanoyl)-L-lysyl-[protein] + AMP + diphosphate + H(+). With EpmB is involved in the beta-lysylation step of the post-translational modification of translation elongation factor P (EF-P). Catalyzes the ATP-dependent activation of (R)-beta-lysine produced by EpmB, forming a lysyl-adenylate, from which the beta-lysyl moiety is then transferred to the epsilon-amino group of a conserved specific lysine residue in EF-P. This chain is Elongation factor P--(R)-beta-lysine ligase, found in Vibrio cholerae serotype O1 (strain ATCC 39315 / El Tor Inaba N16961).